Here is a 729-residue protein sequence, read N- to C-terminus: Polyribonucleotide nucleotidyltransferase (729 aa).

The Mg(2+) site is built by Asp509 and Asp515. The KH domain maps to 575 to 634 (PRVISVKIPVDKIGEVIGPKGKMINQIQADSGAEITVEDDGTIYIGAVDGPSAESARSAI). Residues 646-718 (GERYLGTIVK…SRGKISLSPS (73 aa)) form the S1 motif domain.

It belongs to the polyribonucleotide nucleotidyltransferase family. Requires Mg(2+) as cofactor.

The protein localises to the cytoplasm. It catalyses the reaction RNA(n+1) + phosphate = RNA(n) + a ribonucleoside 5'-diphosphate. Its function is as follows. Involved in mRNA degradation. Catalyzes the phosphorolysis of single-stranded polyribonucleotides processively in the 3'- to 5'-direction. In Frankia casuarinae (strain DSM 45818 / CECT 9043 / HFP020203 / CcI3), this protein is Polyribonucleotide nucleotidyltransferase.